Reading from the N-terminus, the 312-residue chain is Olfactory receptor 14C36 (312 aa).

Residues 1–23 (MPNSTTVMEFLLMRFSDVWTLQI) are Extracellular-facing. N3 carries N-linked (GlcNAc...) asparagine glycosylation. Residues 24–44 (LHSASFFMLYLVTLMGNILIV) form a helical membrane-spanning segment. At 45-52 (TVTTCDSS) the chain is on the cytoplasmic side. The chain crosses the membrane as a helical span at residues 53 to 73 (LHMPMYFFLRNLSILDACYIS). At 74–97 (VTVPTSCVNSLLDSTTISKAGCVA) the chain is on the extracellular side. An intrachain disulfide couples C95 to C187. A helical transmembrane segment spans residues 98–118 (QVFLVVFFVYVELLFLTIMAH). Residues 119-137 (DRYVAVCQPLHYPVIVNSR) lie on the Cytoplasmic side of the membrane. A helical membrane pass occupies residues 138-158 (ICIQMTLASLLSGLVYAGMHT). Over 159–194 (GSTFQLPFCRSNVIHQFFCDIPSLLKLSCSDTFSNE) the chain is Extracellular. Residues 195 to 215 (VMIVVSALGVGGGCFIFIIRS) traverse the membrane as a helical segment. Residues 216-235 (YIHIFSTVLGFPRGADRTKA) lie on the Cytoplasmic side of the membrane. A helical transmembrane segment spans residues 236–256 (FSTCIPHILVVSVFLSSCSSV). Topologically, residues 257–269 (YLRPPAIPAATQD) are extracellular. The chain crosses the membrane as a helical span at residues 270–290 (LILSGFYSIMPPLFNPIIYSL). Over 291–312 (RNKQIKVAIKKIMKRIFYSENV) the chain is Cytoplasmic.

The protein belongs to the G-protein coupled receptor 1 family.

The protein resides in the cell membrane. Functionally, odorant receptor. The polypeptide is Olfactory receptor 14C36 (OR14C36) (Homo sapiens (Human)).